The chain runs to 251 residues: Triosephosphate isomerase (251 aa).

Residue 12 to 14 coordinates substrate; that stretch reads NWK. The Electrophile role is filled by histidine 99. Glutamate 169 acts as the Proton acceptor in catalysis. Substrate is bound by residues glycine 175, serine 214, and 235 to 236; that span reads GG.

It belongs to the triosephosphate isomerase family. In terms of assembly, homodimer.

It is found in the cytoplasm. The enzyme catalyses D-glyceraldehyde 3-phosphate = dihydroxyacetone phosphate. Its pathway is carbohydrate biosynthesis; gluconeogenesis. It functions in the pathway carbohydrate degradation; glycolysis; D-glyceraldehyde 3-phosphate from glycerone phosphate: step 1/1. Functionally, involved in the gluconeogenesis. Catalyzes stereospecifically the conversion of dihydroxyacetone phosphate (DHAP) to D-glyceraldehyde-3-phosphate (G3P). The protein is Triosephosphate isomerase of Bradyrhizobium sp. (strain BTAi1 / ATCC BAA-1182).